The chain runs to 156 residues: Myosin regulatory light chain B, smooth adductor muscle (156 aa).

The residue at position 1 (alanine 1) is a Blocked amino end (Ala). 2 EF-hand domains span residues 15-50 (KQIQ…LGRT) and 84-119 (DTEE…MGDN). The Ca(2+) site is built by aspartate 28, asparagine 30, aspartate 32, and aspartate 39.

Functionally, in molluscan muscle, calcium regulation is associated with myosin rather than with actin. Muscle myosin contains two types of light chains: the catalytic light chain, essential for ATPase activity, and the regulatory light chain, a calcium-binding protein responsible for Ca(2+) dependent binding and Ca(2+) dependent Mg-ATPase activity. The polypeptide is Myosin regulatory light chain B, smooth adductor muscle (Mizuhopecten yessoensis (Japanese scallop)).